Consider the following 530-residue polypeptide: Transcriptional regulator VasH (530 aa).

The Sigma-54 factor interaction domain maps to 193-422 (LIGESAAMQK…LKHLIEFGCA (230 aa)). ATP is bound by residues 221–228 (GETGTGKE) and 284–293 (ANGGTLFLDE).

Its function is as follows. Transcriptional regulator of the type VI secretion system. This Vibrio cholerae serotype O1 (strain ATCC 39315 / El Tor Inaba N16961) protein is Transcriptional regulator VasH.